We begin with the raw amino-acid sequence, 456 residues long: GTPase Der (456 aa).

EngA-type G domains are found at residues 4–169 and 178–353; these read PVVA…PSKD and VQLA…DQSR. GTP-binding positions include 10 to 17, 57 to 61, 120 to 123, 184 to 191, 231 to 235, and 296 to 299; these read GRPNVGKS, DTGGL, NKCE, DTAGI, and NKWD. Residues 354–439 enclose the KH-like domain; the sequence is RRVTTSVVNE…PIKLFWRGKQ (86 aa).

It belongs to the TRAFAC class TrmE-Era-EngA-EngB-Septin-like GTPase superfamily. EngA (Der) GTPase family. As to quaternary structure, associates with the 50S ribosomal subunit.

Functionally, GTPase that plays an essential role in the late steps of ribosome biogenesis. This Prochlorococcus marinus (strain NATL2A) protein is GTPase Der.